Here is a 367-residue protein sequence, read N- to C-terminus: C-C chemokine receptor type 9 (367 aa).

Residues 1–46 (MVPTEATSLILNPSDDYGYDGTPPMEYDTNLTDYFCEKSHVRQFAG) are Extracellular-facing. N-linked (GlcNAc...) asparagine glycosylation is present at Asn-30. 2 disulfide bridges follow: Cys-36-Cys-287 and Cys-117-Cys-196. The chain crosses the membrane as a helical span at residues 47–72 (HFLPPLYWLVFIVGAVGNSLVILVYW). Residues 73-83 (YCTRVKTMTDM) lie on the Cytoplasmic side of the membrane. The chain crosses the membrane as a helical span at residues 84-107 (FLLNLAIADLLFLTTLPFWAIAAA). Over 108 to 118 (DQWKFQTFMCK) the chain is Extracellular. Residues 119–148 (VVNSMYKMNFYSCVLLIMCISVDRYIAIAQ) form a helical membrane-spanning segment. Residues 149 to 157 (AMRAQMWRQ) lie on the Cytoplasmic side of the membrane. Residues 158 to 183 (KRLLYSKMVCFTIWVMAAALCLPELL) form a helical membrane-spanning segment. The Extracellular portion of the chain corresponds to 184–206 (YSQVKEEHGTAICTVVYSSNEST). A glycan (N-linked (GlcNAc...) asparagine) is linked at Asn-203. A helical membrane pass occupies residues 207 to 241 (KLKSAVLTLKVTLGFFLPFVVMACCYAIIIHTLIR). Residues 242 to 246 (AKKSS) lie on the Cytoplasmic side of the membrane. The helical transmembrane segment at 247–281 (KHKALKVTITVLTVFVLSQFPHNCVLLVQTIDAYA) threads the bilayer. Residues 282-288 (TFISSCA) are Extracellular-facing. A helical transmembrane segment spans residues 289–319 (LSIKIDICFQVTQTVAFFHSCLNPVLYVFVG). Topologically, residues 320–367 (ERFRRDLVKTLKNLGCISQAQWVSFTRREGSLKLSSMLLETTSGALSF) are cytoplasmic.

The protein belongs to the G-protein coupled receptor 1 family.

The protein localises to the cell membrane. Functionally, receptor for chemokine SCYA25/TECK. Subsequently transduces a signal by increasing the intracellular calcium ions level. This chain is C-C chemokine receptor type 9 (CCR9), found in Ovis aries (Sheep).